Consider the following 408-residue polypeptide: Phosphopentomutase (408 aa).

Residues D10, D307, H312, D348, H349, and H360 each coordinate Mn(2+).

This sequence belongs to the phosphopentomutase family. Mn(2+) is required as a cofactor.

The protein resides in the cytoplasm. It carries out the reaction 2-deoxy-alpha-D-ribose 1-phosphate = 2-deoxy-D-ribose 5-phosphate. The catalysed reaction is alpha-D-ribose 1-phosphate = D-ribose 5-phosphate. The protein operates within carbohydrate degradation; 2-deoxy-D-ribose 1-phosphate degradation; D-glyceraldehyde 3-phosphate and acetaldehyde from 2-deoxy-alpha-D-ribose 1-phosphate: step 1/2. Isomerase that catalyzes the conversion of deoxy-ribose 1-phosphate (dRib-1-P) and ribose 1-phosphate (Rib-1-P) to deoxy-ribose 5-phosphate (dRib-5-P) and ribose 5-phosphate (Rib-5-P), respectively. This chain is Phosphopentomutase, found in Buchnera aphidicola subsp. Baizongia pistaciae (strain Bp).